Consider the following 269-residue polypeptide: Shikimate dehydrogenase (NADP(+)) (269 aa).

Shikimate-binding positions include 17–19 (SKS) and Thr64. Lys68 functions as the Proton acceptor in the catalytic mechanism. Asp80 is an NADP(+) binding site. Residues Asn89 and Asp105 each coordinate shikimate. Residues 130 to 134 (GAGGA), 154 to 159 (NRTRAK), and Met213 contribute to the NADP(+) site. Tyr215 serves as a coordination point for shikimate. NADP(+) is bound at residue Gly237.

The protein belongs to the shikimate dehydrogenase family. As to quaternary structure, homodimer.

The enzyme catalyses shikimate + NADP(+) = 3-dehydroshikimate + NADPH + H(+). It functions in the pathway metabolic intermediate biosynthesis; chorismate biosynthesis; chorismate from D-erythrose 4-phosphate and phosphoenolpyruvate: step 4/7. In terms of biological role, involved in the biosynthesis of the chorismate, which leads to the biosynthesis of aromatic amino acids. Catalyzes the reversible NADPH linked reduction of 3-dehydroshikimate (DHSA) to yield shikimate (SA). This Neisseria meningitidis serogroup C (strain 053442) protein is Shikimate dehydrogenase (NADP(+)).